Consider the following 274-residue polypeptide: 2,3,4,5-tetrahydropyridine-2,6-dicarboxylate N-succinyltransferase (274 aa).

It belongs to the transferase hexapeptide repeat family.

The protein resides in the cytoplasm. The catalysed reaction is (S)-2,3,4,5-tetrahydrodipicolinate + succinyl-CoA + H2O = (S)-2-succinylamino-6-oxoheptanedioate + CoA. It participates in amino-acid biosynthesis; L-lysine biosynthesis via DAP pathway; LL-2,6-diaminopimelate from (S)-tetrahydrodipicolinate (succinylase route): step 1/3. This Alteromonas mediterranea (strain DSM 17117 / CIP 110805 / LMG 28347 / Deep ecotype) protein is 2,3,4,5-tetrahydropyridine-2,6-dicarboxylate N-succinyltransferase.